A 146-amino-acid chain; its full sequence is Ubiquitin-conjugating enzyme E2 variant 1D (146 aa).

The UBC core domain occupies 13–146; sequence PRNFRLLEEL…LVQPPEGTCF (134 aa).

The protein belongs to the ubiquitin-conjugating enzyme family. In terms of assembly, heterodimer with UBC35 or UBC36. As to expression, expressed in roots, shoots, leaves, stems, flowers and pollen.

Its function is as follows. Has no ubiquitin ligase activity on its own. The heterodimer with UBC catalyzes the synthesis of non-canonical poly-ubiquitin chains that are linked through 'Lys-63'. This type of poly-ubiquitination does not lead to protein degradation by the proteasome. Mediates transcriptional activation of target genes. May play a role in the control of progress through the cell cycle and differentiation. Involved in the error-free DNA repair pathway and contributes to the survival of cells after DNA damage. The protein is Ubiquitin-conjugating enzyme E2 variant 1D (UEV1D) of Arabidopsis thaliana (Mouse-ear cress).